Consider the following 165-residue polypeptide: Protein SprT (165 aa).

One can recognise a SprT-like domain in the interval 20–162; it reads EKLAQANLKL…YRCVHCGEQL (143 aa). Residue His78 participates in Zn(2+) binding. Glu79 is a catalytic residue. His82 provides a ligand contact to Zn(2+).

It belongs to the SprT family. Zn(2+) serves as cofactor.

It is found in the cytoplasm. In Escherichia coli (strain SMS-3-5 / SECEC), this protein is Protein SprT.